Reading from the N-terminus, the 83-residue chain is Mitochondrial import inner membrane translocase subunit Tim8 B (83 aa).

A2 carries the post-translational modification N-acetylalanine. Residues 36 to 59 carry the Twin CX3C motif motif; it reads CWDKCVEKPGSRLDSRTENCLSSC. 2 disulfides stabilise this stretch: C36/C59 and C40/C55.

It belongs to the small Tim family. In terms of assembly, heterohexamer; possibly composed of 3 copies of TIMM8B and 3 copies of TIMM13, named soluble 70 kDa complex. Associates with the TIM22 complex, whose core is composed of TIMM22.

It is found in the mitochondrion inner membrane. Probable mitochondrial intermembrane chaperone that participates in the import and insertion of some multi-pass transmembrane proteins into the mitochondrial inner membrane. Also required for the transfer of beta-barrel precursors from the TOM complex to the sorting and assembly machinery (SAM complex) of the outer membrane. Acts as a chaperone-like protein that protects the hydrophobic precursors from aggregation and guide them through the mitochondrial intermembrane space. This is Mitochondrial import inner membrane translocase subunit Tim8 B (Timm8b) from Mus musculus (Mouse).